Reading from the N-terminus, the 328-residue chain is Peroxidase 25 (328 aa).

Residues 1–26 (MGVYLGKYCYIMIIMLVLVLGKEVRS) form the signal peptide. Cystine bridges form between C38–C114, C71–C76, C120–C324, and C198–C230. The active-site Proton acceptor is H69. Ca(2+) is bound by residues D70, V73, G75, D77, and S79. Residue P161 coordinates substrate. H191 is a heme b binding site. T192 contacts Ca(2+). Residue N207 is glycosylated (N-linked (GlcNAc...) asparagine). Residues D243, S246, and D251 each contribute to the Ca(2+) site.

It belongs to the peroxidase family. Classical plant (class III) peroxidase subfamily. Heme b serves as cofactor. It depends on Ca(2+) as a cofactor.

The protein localises to the secreted. It carries out the reaction 2 a phenolic donor + H2O2 = 2 a phenolic radical donor + 2 H2O. In terms of biological role, removal of H(2)O(2), oxidation of toxic reductants, biosynthesis and degradation of lignin, suberization, auxin catabolism, response to environmental stresses such as wounding, pathogen attack and oxidative stress. These functions might be dependent on each isozyme/isoform in each plant tissue. This is Peroxidase 25 (PER25) from Arabidopsis thaliana (Mouse-ear cress).